A 577-amino-acid chain; its full sequence is MNLFDVADFYINKIVTSQSKLSVANVNEHQRIKVLLLDKNTTPTISLCATQSELLKHEIYLVERIENEQREVSRHLRCLVYVKPTEETLQHLLRELRNPRYGEYQIFFSNIVSKSQLERLAESDDLEAVTKVEEIFQDFFILNQDLFSFDLQPREFLSNKLVWSEGGLTKCTNSLVSVLLSLKIKPDIRYEGASKICERLAKEVSYEIGKNERTFFDFPVMDSTPVLLILDRNTDPITPLLQPWTYQSMINEYIGIKRNIVDLSKVPRIDKDLEKVTLSSKQDAFFRDTMYLNFGELGDKVKQYVTTYKDKTQTNSQINSIEDIKNFIEKYPEFRKLSGNVAKHMAIVGELDRQLKIKNIWEISEIEQNLSAHDANEEDFSDLIKLLQNEAVDKYYKLKLACIYSLNNQTSSDKIRQLVEILSQQLPPEDVNFFHKFKSLFSRQDKMTQSNHDKDDILTELARRFNSRMNSKSNTAENVYMQHIPEISSLLTDLSKNALFRDRFKEIDTQGHRVIGNQQSKDIPQDVILFVIGGVTYEEARLVHDFNGTMNNRMRVVLGGTSILSTKEYMDSIRSAK.

The protein belongs to the STXBP/unc-18/SEC1 family. As to quaternary structure, interacts with PEP7 and TLG2.

It localises to the cytoplasm. Its subcellular location is the vacuole membrane. Functionally, essential for vacuolar protein sorting. Function in membrane traffic between the Golgi and the vacuole. The sequence is that of Vacuolar protein sorting-associated protein 45 (VPS45) from Saccharomyces cerevisiae (strain ATCC 204508 / S288c) (Baker's yeast).